The primary structure comprises 397 residues: Ribosomal RNA large subunit methyltransferase I (397 aa).

Residues 2–80 (AIRIKLKPGR…KEETIDADFF (79 aa)) enclose the PUA domain.

It belongs to the methyltransferase superfamily. RlmI family.

Its subcellular location is the cytoplasm. It catalyses the reaction cytidine(1962) in 23S rRNA + S-adenosyl-L-methionine = 5-methylcytidine(1962) in 23S rRNA + S-adenosyl-L-homocysteine + H(+). Specifically methylates the cytosine at position 1962 (m5C1962) of 23S rRNA. This Shewanella frigidimarina (strain NCIMB 400) protein is Ribosomal RNA large subunit methyltransferase I.